Consider the following 206-residue polypeptide: Large ribosomal subunit protein uL4 (206 aa).

The disordered stretch occupies residues 48–97 (THAVKNRSLVSGGGKKPWKQKHTGRARQGSTRASQWVGGGKAMGPKPRDY). The segment covering 63 to 72 (KPWKQKHTGR) has biased composition (basic residues).

Belongs to the universal ribosomal protein uL4 family. In terms of assembly, part of the 50S ribosomal subunit.

Functionally, one of the primary rRNA binding proteins, this protein initially binds near the 5'-end of the 23S rRNA. It is important during the early stages of 50S assembly. It makes multiple contacts with different domains of the 23S rRNA in the assembled 50S subunit and ribosome. Forms part of the polypeptide exit tunnel. This is Large ribosomal subunit protein uL4 from Anaeromyxobacter sp. (strain K).